The chain runs to 273 residues: uncharacterized protein (273 aa).

This is an uncharacterized protein from Acheta domesticus (House cricket).